The following is a 39-amino-acid chain: Photosystem II reaction center protein L (39 aa).

Residues 18–38 (SLYWGLLLIFVLAVLFSNYFF) form a helical membrane-spanning segment.

It belongs to the PsbL family. In terms of assembly, PSII is composed of 1 copy each of membrane proteins PsbA, PsbB, PsbC, PsbD, PsbE, PsbF, PsbH, PsbI, PsbJ, PsbK, PsbL, PsbM, PsbT, PsbX, PsbY, PsbZ, Psb30/Ycf12, at least 3 peripheral proteins of the oxygen-evolving complex and a large number of cofactors. It forms dimeric complexes.

The protein localises to the plastid thylakoid membrane. In terms of biological role, one of the components of the core complex of photosystem II (PSII). PSII is a light-driven water:plastoquinone oxidoreductase that uses light energy to abstract electrons from H(2)O, generating O(2) and a proton gradient subsequently used for ATP formation. It consists of a core antenna complex that captures photons, and an electron transfer chain that converts photonic excitation into a charge separation. This subunit is found at the monomer-monomer interface and is required for correct PSII assembly and/or dimerization. In Cuscuta gronovii (Common dodder), this protein is Photosystem II reaction center protein L.